The chain runs to 165 residues: 3-isopropylmalate dehydratase small subunit (165 aa).

The protein belongs to the LeuD family. LeuD type 2 subfamily. In terms of assembly, heterodimer of LeuC and LeuD.

The enzyme catalyses (2R,3S)-3-isopropylmalate = (2S)-2-isopropylmalate. Its pathway is amino-acid biosynthesis; L-leucine biosynthesis; L-leucine from 3-methyl-2-oxobutanoate: step 2/4. Its function is as follows. Catalyzes the isomerization between 2-isopropylmalate and 3-isopropylmalate, via the formation of 2-isopropylmaleate. The chain is 3-isopropylmalate dehydratase small subunit from Helicobacter hepaticus (strain ATCC 51449 / 3B1).